The following is a 198-amino-acid chain: MYYPEPIARLIESFSKLPGIGQKTATRLAFYTIGMEDQDVNEFAKNLLSAKRDLSFCSICGNLTESDPCAICTDPTRDRTTILVVEESKDVLAMEKIREYRGLYHVLHGTISPMNGISPDEINVKTLITRLMDSEVKEVIIATNATSDGEATAMYLARMIKPAGIKVTRLARGLAVGSDIEYADEITLSKAVENRLEI.

The C4-type zinc-finger motif lies at 57–72; the sequence is CSICGNLTESDPCAIC. A Toprim domain is found at 80-175; the sequence is TTILVVEESK…KVTRLARGLA (96 aa).

This sequence belongs to the RecR family.

Functionally, may play a role in DNA repair. It seems to be involved in an RecBC-independent recombinational process of DNA repair. It may act with RecF and RecO. The sequence is that of Recombination protein RecR from Lactococcus lactis subsp. lactis (strain IL1403) (Streptococcus lactis).